A 177-amino-acid polypeptide reads, in one-letter code: Keratin-associated protein 1-1 (177 aa).

The protein belongs to the KRTAP type 1 family. In terms of assembly, interacts with hair keratins. Expressed in the middle/upper portions of the hair cortex, in the region termed the keratogenous zone.

Its function is as follows. In the hair cortex, hair keratin intermediate filaments are embedded in an interfilamentous matrix, consisting of hair keratin-associated proteins (KRTAP), which are essential for the formation of a rigid and resistant hair shaft through their extensive disulfide bond cross-linking with abundant cysteine residues of hair keratins. The matrix proteins include the high-sulfur and high-glycine-tyrosine keratins. In Homo sapiens (Human), this protein is Keratin-associated protein 1-1 (KRTAP1-1).